A 156-amino-acid polypeptide reads, in one-letter code: Large ribosomal subunit protein uL22 (156 aa).

The interval 114 to 156 is disordered; that stretch reads VESRPKQEKGGKAGASKASSRAARAQGSKAAAAKKTESKGGTS. Residues 127-146 show a composition bias toward low complexity; it reads GASKASSRAARAQGSKAAAA. Residues 147 to 156 show a composition bias toward basic and acidic residues; the sequence is KKTESKGGTS.

Belongs to the universal ribosomal protein uL22 family. In terms of assembly, part of the 50S ribosomal subunit.

Its function is as follows. This protein binds specifically to 23S rRNA; its binding is stimulated by other ribosomal proteins, e.g. L4, L17, and L20. It is important during the early stages of 50S assembly. It makes multiple contacts with different domains of the 23S rRNA in the assembled 50S subunit and ribosome. Functionally, the globular domain of the protein is located near the polypeptide exit tunnel on the outside of the subunit, while an extended beta-hairpin is found that lines the wall of the exit tunnel in the center of the 70S ribosome. In Mycobacteroides abscessus (strain ATCC 19977 / DSM 44196 / CCUG 20993 / CIP 104536 / JCM 13569 / NCTC 13031 / TMC 1543 / L948) (Mycobacterium abscessus), this protein is Large ribosomal subunit protein uL22.